The primary structure comprises 143 residues: Glutamyl-tRNA(Gln) amidotransferase subunit C, chloroplastic/mitochondrial (143 aa).

It belongs to the GatC family. As to quaternary structure, subunit of the heterotrimeric GatCAB amidotransferase (AdT) complex, composed of A, B and C subunits.

The protein localises to the mitochondrion. It localises to the plastid. Its subcellular location is the chloroplast. The enzyme catalyses L-glutamyl-tRNA(Gln) + L-glutamine + ATP + H2O = L-glutaminyl-tRNA(Gln) + L-glutamate + ADP + phosphate + H(+). Its function is as follows. Allows the formation of correctly charged Gln-tRNA(Gln) through the transamidation of misacylated Glu-tRNA(Gln) in chloroplasts and mitochondria. The reaction takes place in the presence of glutamine and ATP through an activated gamma-phospho-Glu-tRNA(Gln). This Ricinus communis (Castor bean) protein is Glutamyl-tRNA(Gln) amidotransferase subunit C, chloroplastic/mitochondrial.